The sequence spans 159 residues: Ecotin (159 aa).

The first 22 residues, Met-1 to Ala-22, serve as a signal peptide directing secretion. Cysteines 68 and 105 form a disulfide.

This sequence belongs to the protease inhibitor I11 (ecotin) family. As to quaternary structure, homodimer.

Its subcellular location is the periplasm. Functionally, general inhibitor of family S1 serine proteases. The chain is Ecotin from Pseudomonas putida (strain GB-1).